We begin with the raw amino-acid sequence, 65 residues long: Sperm protamine P1 (65 aa).

The segment at 1–65 (MARYRHSRSR…RYSRRRRRRY (65 aa)) is disordered.

It belongs to the protamine P1 family. Testis.

It localises to the nucleus. The protein localises to the chromosome. Its function is as follows. Protamines substitute for histones in the chromatin of sperm during the haploid phase of spermatogenesis. They compact sperm DNA into a highly condensed, stable and inactive complex. This Lagorchestes hirsutus (Rufous hare-wallaby) protein is Sperm protamine P1 (PRM1).